The chain runs to 319 residues: Protein HEXIM1 (319 aa).

Residues 1–22 (MELIKEETAPEDDSRGRQRDCR) show a composition bias toward basic and acidic residues. 4 disordered regions span residues 1–111 (MELI…KKRR), 157–223 (LMEE…LQKD), 262–286 (NNWL…RVRE), and 299–319 (NELL…SQPS). A compositionally biased stretch (polar residues) spans 24–35 (SVVSSKQVQRNQ). Positions 49–61 (PMCRDRSDPEPRT) are enriched in basic and acidic residues. Basic residues predominate over residues 97-111 (GKKKHRRRPSKKKRR). Positions 185 to 202 (TASEDENFEAEEDDEEEG) are enriched in acidic residues. The span at 203-216 (GGGSDGMGRPGQAG) shows a compositional bias: gly residues. Residues 240–306 (SKQELVREYL…ENNELLLKTP (67 aa)) are a coiled coil. Polar residues predominate over residues 306–319 (PASNEPGLNQSQPS).

Belongs to the HEXIM family. In terms of assembly, homooligomer and heterooligomer. Core component of the 7SK RNP complex.

It is found in the nucleus. Its subcellular location is the cytoplasm. In terms of biological role, transcriptional regulator which functions as a general RNA polymerase II transcription inhibitor. Core component of the 7SK RNP complex: in cooperation with 7SK snRNA sequesters P-TEFb in a large inactive 7SK snRNP complex preventing RNA polymerase II phosphorylation and subsequent transcriptional elongation. Plays a role in the regulation of DNA virus-mediated innate immune response by assembling into the HDP-RNP complex, a complex that serves as a platform for IRF3 phosphorylation and subsequent innate immune response activation through the cGAS-STING pathway. The chain is Protein HEXIM1 (hexim1) from Danio rerio (Zebrafish).